Consider the following 94-residue polypeptide: MTKSELIARLAARHPQLGTKDAELAVKVILDAMAKSLSQGQRIEIRGFGSFDLNYRPPRVGRNPKSGEKVRVPEKYVPHFKAGKEMRERVDQKN.

Belongs to the bacterial histone-like protein family. In terms of assembly, heterodimer of an alpha and a beta chain.

In terms of biological role, this protein is one of the two subunits of integration host factor, a specific DNA-binding protein that functions in genetic recombination as well as in transcriptional and translational control. The polypeptide is Integration host factor subunit beta (Nitrosospira multiformis (strain ATCC 25196 / NCIMB 11849 / C 71)).